Here is a 400-residue protein sequence, read N- to C-terminus: Protection of telomeres homolog 1 (400 aa).

This sequence belongs to the telombin family. Expressed in sperm and oocytes.

Its subcellular location is the nucleus. The protein localises to the nucleus envelope. The protein resides in the chromosome. It is found in the telomere. Telomeric DNA-binding protein, which binds to single-stranded C-rich repeat sequences, with high specificity to the 5'-GCCTAA-3' sequence. Repeat sequence binding can be at the 5' or 3' telomeric end. May have a role in protecting the 5' end of the C-rich strand of the telomere. Acts redundantly with pot-2 to negatively regulate telomerase-mediated telomere extension. Also regulates telomere length by the telomerase-independent telomere maintenance pathway called ALT (alternative lengthening of telomeres). Through sun-1, anchors telomeres to the nuclear envelope in embryos. This is Protection of telomeres homolog 1 from Caenorhabditis elegans.